Reading from the N-terminus, the 165-residue chain is NADPH-dependent 7-cyano-7-deazaguanine reductase (165 aa).

Residue cysteine 56 is the Thioimide intermediate of the active site. Aspartate 63 serves as the catalytic Proton donor. Residues 78–80 and 97–98 each bind substrate; these read VES and HE.

Belongs to the GTP cyclohydrolase I family. QueF type 1 subfamily.

It is found in the cytoplasm. It catalyses the reaction 7-aminomethyl-7-carbaguanine + 2 NADP(+) = 7-cyano-7-deazaguanine + 2 NADPH + 3 H(+). It participates in tRNA modification; tRNA-queuosine biosynthesis. Is totally inhibited by 4-aminobenzylcyanide in vitro. In terms of biological role, catalyzes the NADPH-dependent reduction of 7-cyano-7-deazaguanine (preQ0) to 7-aminomethyl-7-deazaguanine (preQ1), a late step in the queuosine pathway. Is highly specific for its natural substrate preQ0, since it cannot use various aliphatic, aromatic and heterocyclic nitriles, although it can reduce the substrate analog 5-cyanopyrrolo[2,3-d]pyrimidin-4-one with lesser efficiency. In Geobacillus kaustophilus (strain HTA426), this protein is NADPH-dependent 7-cyano-7-deazaguanine reductase.